The chain runs to 354 residues: Neuronal growth regulator 1 (354 aa).

The N-terminal stretch at methionine 1 to serine 37 is a signal peptide. 3 Ig-like C2-type domains span residues valine 38–threonine 134, proline 139–valine 221, and proline 225–asparagine 313. Cysteine 60 and cysteine 118 form a disulfide bridge. Asparagine 73 and asparagine 155 each carry an N-linked (GlcNAc...) asparagine glycan. Intrachain disulfides connect cysteine 160-cysteine 203 and cysteine 245-cysteine 297. A Phosphotyrosine modification is found at tyrosine 187. N-linked (GlcNAc...) asparagine glycans are attached at residues asparagine 275, asparagine 286, asparagine 294, and asparagine 307. Glycine 324 is lipidated: GPI-anchor amidated glycine. A propeptide spans serine 325–glutamine 354 (removed in mature form).

Belongs to the immunoglobulin superfamily. IgLON family.

The protein resides in the cell membrane. May be involved in cell-adhesion. May function as a trans-neural growth-promoting factor in regenerative axon sprouting in the mammalian brain. The polypeptide is Neuronal growth regulator 1 (NEGR1) (Homo sapiens (Human)).